A 1258-amino-acid chain; its full sequence is MKEDKVLILRTCANNMADHGGIIWPLSGIVECKYWKPVKGFENGLTGLIWGKGSDSPLSLHADARWVVAEVDADECIAIETHGWIKFPRAEVLHVGTKTSAMQFILHHRADYVACTEMQAGPGSPDVTSEVKVGNRSLPVTDDIDATIESGSTQPTQTIEIATYGSTLSGTHQSQLIAGYGSTETAGDSSTLIAGYGSTGTAGADSTLVAGYGSTQTAGEESSQMAGYGSTQTGMKGSDLTAGYGSTGTAGDDSSLIAGYGSTQTAGEDSSLTAGYGSTQTAQKGSDLTAGYGSTGTAGADSSLIAGYGSTQTAGEESTQTAGYGSTQTAQKGSDLTAGYGSTGTAGDDSSLIAGYGSTQTAGEDSSLTAGYGSTQTAQKGSDLTAGYGSTGTAGADSSLIAGYGSTQTAGEESTQTAGYGSTQTAQKGSDLTAGYGSTGTAGDDSSLIAGYGSTQTAGEDSSLTAGYGSTQTAQKGSDLTAGYGSTSTAGYESSLIAGYGSTQTAGYGSTLTAGYGSTQTAQNESDLITGYGSTSTAGANSSLIAGYGSTQTASYNSVLTAGYGSTQTAREGSDLTAGYGSTGTAGSDSSIIAGYGSTQTASYHSSLTAGYGSTQTAREQSVLTTGYGSTSTAGADSSLIAGYGSTQTAGYNSILTAGYGSTQTAQEGSDLTAGYGSTSTAGADSSLIAGYGSTQTAGYNSILTAGYGSTQTAQEGSDLTSGYGSTSTAGADSSLIAGYGSTQTASYHSSLTAGYGSTQTAREQSVLTTGYGSTSTAGADSSLIAGYGSTQTAGYHSILTAGYGSTQTAQERSDLTTGYGSTSTAGADSSLIAGYGSTQTAGYNSILTAGYGSTQTAQENSDLTTGYGSTSTAGYDSSLIAGYGSTQTAGYNSILTAGYGSTQTAQENSDLTTGYGSTSTAGYESSLIAGYGSTQTASFKSTLMAGYGSSQTAREQSSLTAGYGSTSMAGYDSSLIAGYGSTQTAGYQSTLTAGYGSTQTAEHSSTLTAGYGSTATAGADSSLIAGYGSSLTSGIRSFLTAGYGSTLISGLRSVLTAGYGSSLISGRRSSLTAGYGSNQIASHRSSLIAGPESTQITGNRSMLIAGKGSSQTAGYRSTLISGADSVQMAGERGKLIAGADSTQTAGDRSKLLAGNNSYLTAGDRSKLTAGNDCILMAGDRSKLTAGINSILTAGCRSKLIGSNGSTLTAGENSVLIFRCWDGKRYTNVVAKTGKGGIEADMPYQMDEDNNIVNKPEE.

An octapeptide periodicity region spans residues 162 to 1217 (ATYGSTLSGT…LTAGENSVLI (1056 aa)). 5 disordered regions span residues 260–287 (YGST…KGSD), 311–342 (TQTA…GYGS), 356–383 (YGST…KGSD), 407–438 (TQTA…GYGS), and 452–480 (YGST…GSDL). Polar residues-rich tracts occupy residues 261–286 (GSTQ…QKGS), 311–334 (TQTA…QKGS), 357–382 (GSTQ…QKGS), 407–430 (TQTA…QKGS), and 453–480 (GSTQ…GSDL).

Belongs to the bacterial ice nucleation protein family.

The protein localises to the cell outer membrane. Ice nucleation proteins enable bacteria to nucleate crystallization in supercooled water. The chain is Ice nucleation protein (iceE) from Enterobacter agglomerans (Erwinia herbicola).